Reading from the N-terminus, the 277-residue chain is Large ribosomal subunit protein uL2 (277 aa).

The segment at 219–277 (TVRGSVMNPNDHPHGGGEGKAPVGRKAPSTPWGKPALGLKTRNKKAKSDKLIVRRRNQK) is disordered.

Belongs to the universal ribosomal protein uL2 family. Part of the 50S ribosomal subunit. Forms a bridge to the 30S subunit in the 70S ribosome.

Its function is as follows. One of the primary rRNA binding proteins. Required for association of the 30S and 50S subunits to form the 70S ribosome, for tRNA binding and peptide bond formation. It has been suggested to have peptidyltransferase activity; this is somewhat controversial. Makes several contacts with the 16S rRNA in the 70S ribosome. This is Large ribosomal subunit protein uL2 from Streptococcus suis (strain 98HAH33).